The sequence spans 102 residues: Small ribosomal subunit protein uS10 (102 aa).

The protein belongs to the universal ribosomal protein uS10 family. Part of the 30S ribosomal subunit.

Functionally, involved in the binding of tRNA to the ribosomes. This chain is Small ribosomal subunit protein uS10, found in Trichlorobacter lovleyi (strain ATCC BAA-1151 / DSM 17278 / SZ) (Geobacter lovleyi).